We begin with the raw amino-acid sequence, 472 residues long: Glutamate--tRNA ligase (472 aa).

The 'HIGH' region signature appears at 18–28 (PSPTGYLHIGG). Positions 122 to 138 (RARGEKPRYDGRWRPEP) are enriched in basic and acidic residues. Residues 122 to 150 (RARGEKPRYDGRWRPEPGKTLPVPPSGVQ) are disordered. The 'KMSKS' region motif lies at 250–254 (KLSKR). Lys-253 lines the ATP pocket.

This sequence belongs to the class-I aminoacyl-tRNA synthetase family. Glutamate--tRNA ligase type 1 subfamily. Monomer.

It localises to the cytoplasm. The catalysed reaction is tRNA(Glu) + L-glutamate + ATP = L-glutamyl-tRNA(Glu) + AMP + diphosphate. Functionally, catalyzes the attachment of glutamate to tRNA(Glu) in a two-step reaction: glutamate is first activated by ATP to form Glu-AMP and then transferred to the acceptor end of tRNA(Glu). This chain is Glutamate--tRNA ligase, found in Thiobacillus denitrificans (strain ATCC 25259 / T1).